We begin with the raw amino-acid sequence, 255 residues long: tRNA (guanine-N(1)-)-methyltransferase (255 aa).

Residues glycine 117 and 137-142 (IGDYVL) each bind S-adenosyl-L-methionine.

It belongs to the RNA methyltransferase TrmD family. In terms of assembly, homodimer.

It localises to the cytoplasm. It carries out the reaction guanosine(37) in tRNA + S-adenosyl-L-methionine = N(1)-methylguanosine(37) in tRNA + S-adenosyl-L-homocysteine + H(+). Functionally, specifically methylates guanosine-37 in various tRNAs. The sequence is that of tRNA (guanine-N(1)-)-methyltransferase from Chromobacterium violaceum (strain ATCC 12472 / DSM 30191 / JCM 1249 / CCUG 213 / NBRC 12614 / NCIMB 9131 / NCTC 9757 / MK).